The following is a 251-amino-acid chain: Flap endonuclease Xni (251 aa).

D104 contributes to the Mg(2+) binding site. One can recognise a 5'-3' exonuclease domain in the interval 160–248 (VSPQQLSDYW…ALTGNLQQLR (89 aa)). Positions 171, 172, 180, 182, and 185 each coordinate K(+). The tract at residues 184 to 189 (GIGPKT) is interaction with DNA.

Belongs to the Xni family. The cofactor is Mg(2+). K(+) is required as a cofactor.

Functionally, has flap endonuclease activity. During DNA replication, flap endonucleases cleave the 5'-overhanging flap structure that is generated by displacement synthesis when DNA polymerase encounters the 5'-end of a downstream Okazaki fragment. This chain is Flap endonuclease Xni, found in Serratia proteamaculans (strain 568).